The chain runs to 65 residues: Large ribosomal subunit protein bL35c (65 aa).

Residues His-25 to Leu-44 show a composition bias toward basic residues. The disordered stretch occupies residues His-25–Ser-45.

It belongs to the bacterial ribosomal protein bL35 family.

The protein localises to the plastid. It is found in the chloroplast. In Pyropia yezoensis (Susabi-nori), this protein is Large ribosomal subunit protein bL35c.